Here is a 136-residue protein sequence, read N- to C-terminus: Histone H2A (136 aa).

Positions 1–11 are enriched in gly residues; that stretch reads MSSGGKSGGKA. Residues 1 to 24 form a disordered region; the sequence is MSSGGKSGGKAGDASSKAQSRSAK. 2 positions are modified to N6-acetyllysine: Lys6 and Lys10. The segment covering 12–24 has biased composition (low complexity); sequence GDASSKAQSRSAK. At Gln108 the chain carries N5-methylglutamine. Residue Ser133 is modified to Phosphoserine. Residues 133–134 carry the [ST]-Q motif motif; it reads SQ.

It belongs to the histone H2A family. The nucleosome is a histone octamer containing two molecules each of H2A, H2B, H3 and H4 assembled in one H3-H4 heterotetramer and two H2A-H2B heterodimers. The octamer wraps approximately 147 bp of DNA. In terms of processing, phosphorylated to form H2AS128ph (gamma-H2A) in response to DNA double-strand breaks (DSBs) generated by exogenous genotoxic agents and by stalled replication forks. Phosphorylation is dependent on the DNA damage checkpoint kinases MEC1/ATR and TEL1/ATM, spreads on either side of a detected DSB site and may mark the surrounding chromatin for recruitment of proteins required for DNA damage signaling and repair. Gamma-H2A is removed from the DNA prior to the strand invasion-primer extension step of the repair process and subsequently dephosphorylated. Dephosphorylation is necessary for efficient recovery from the DNA damage checkpoint. Acetylated by ESA1 to form H2AK4ac and H2AK7ac.

It is found in the nucleus. The protein localises to the chromosome. In terms of biological role, core component of nucleosome which plays a central role in DNA double strand break (DSB) repair. Nucleosomes wrap and compact DNA into chromatin, limiting DNA accessibility to the cellular machineries which require DNA as a template. Histones thereby play a central role in transcription regulation, DNA repair, DNA replication and chromosomal stability. DNA accessibility is regulated via a complex set of post-translational modifications of histones, also called histone code, and nucleosome remodeling. The polypeptide is Histone H2A (HTA1) (Mycosarcoma maydis (Corn smut fungus)).